A 205-amino-acid polypeptide reads, in one-letter code: Ribosomal RNA small subunit methyltransferase G (205 aa).

Residues G73, L78, 124–125 (VE), and R138 contribute to the S-adenosyl-L-methionine site.

Belongs to the methyltransferase superfamily. RNA methyltransferase RsmG family.

It localises to the cytoplasm. The enzyme catalyses guanosine(527) in 16S rRNA + S-adenosyl-L-methionine = N(7)-methylguanosine(527) in 16S rRNA + S-adenosyl-L-homocysteine. Specifically methylates the N7 position of guanine in position 527 of 16S rRNA. The protein is Ribosomal RNA small subunit methyltransferase G of Actinobacillus pleuropneumoniae serotype 5b (strain L20).